The primary structure comprises 299 residues: MQENTRLRIAIQKSGRLSKESIELLSECGVKMHIHEQSLIAFSTNLPIDILRVRDDDIPGLIFDGVVDLGIIGENVLEENELERQSLGENPSYKLLKKLDFGYCRLSLALPQENKFQNLKDFEGLRIATSYPQLLKRFMKENGINYKNCMLTGSVEVAPRANLADAICDLVSSGATLQANNLKEVKVIYESRACLIQKENALSKEKQALVDKIMLRVAGVMQARESKYIMLHAPKEKLDKIQALLPGVERPTILPLAHDEKNVALHMVSKENLFWETMEALKEEGASSILVLPIEKMLK.

Belongs to the ATP phosphoribosyltransferase family. Long subfamily. Mg(2+) is required as a cofactor.

Its subcellular location is the cytoplasm. It catalyses the reaction 1-(5-phospho-beta-D-ribosyl)-ATP + diphosphate = 5-phospho-alpha-D-ribose 1-diphosphate + ATP. The protein operates within amino-acid biosynthesis; L-histidine biosynthesis; L-histidine from 5-phospho-alpha-D-ribose 1-diphosphate: step 1/9. Feedback inhibited by histidine. Its function is as follows. Catalyzes the condensation of ATP and 5-phosphoribose 1-diphosphate to form N'-(5'-phosphoribosyl)-ATP (PR-ATP). Has a crucial role in the pathway because the rate of histidine biosynthesis seems to be controlled primarily by regulation of HisG enzymatic activity. The protein is ATP phosphoribosyltransferase of Campylobacter jejuni subsp. jejuni serotype O:6 (strain 81116 / NCTC 11828).